The following is a 166-amino-acid chain: Small ribosomal subunit protein uS5 (166 aa).

An S5 DRBM domain is found at 12-75 (YIEKLVQVNR…EAARRNMIQV (64 aa)).

This sequence belongs to the universal ribosomal protein uS5 family. In terms of assembly, part of the 30S ribosomal subunit. Contacts proteins S4 and S8.

With S4 and S12 plays an important role in translational accuracy. Functionally, located at the back of the 30S subunit body where it stabilizes the conformation of the head with respect to the body. In Pseudomonas putida (strain ATCC 700007 / DSM 6899 / JCM 31910 / BCRC 17059 / LMG 24140 / F1), this protein is Small ribosomal subunit protein uS5.